A 100-amino-acid chain; its full sequence is Urease subunit gamma (100 aa).

The protein belongs to the urease gamma subunit family. In terms of assembly, heterotrimer of UreA (gamma), UreB (beta) and UreC (alpha) subunits. Three heterotrimers associate to form the active enzyme.

It localises to the cytoplasm. The enzyme catalyses urea + 2 H2O + H(+) = hydrogencarbonate + 2 NH4(+). It participates in nitrogen metabolism; urea degradation; CO(2) and NH(3) from urea (urease route): step 1/1. The chain is Urease subunit gamma from Azotobacter vinelandii (strain DJ / ATCC BAA-1303).